Consider the following 247-residue polypeptide: 5-hydroxytryptamine receptor 2A (247 aa).

Lys-1 is a topological domain (extracellular). A helical membrane pass occupies residues 2–26 (LCAIWIYLDVLFSTASIMHLCAISL). The cysteines at positions 3 and 82 are disulfide-linked. Asp-10 is a serotonin binding site. Residues 27–29 (DRY) carry the DRY motif; important for ligand-induced conformation changes motif. Residues 27 to 46 (DRYVAIQNPIHHSRFNSRTK) lie on the Cytoplasmic side of the membrane. Residues 47–70 (AFLKIIAVWTISVGISMPVPVFGL) form a helical membrane-spanning segment. Over 71–87 (QDDSKVFKEGSCLLADD) the chain is Extracellular. A helical transmembrane segment spans residues 88 to 113 (NFVLIGSFVAFFIPLTIMVITYFLTI). Topologically, residues 114–177 (KSLQKEATLC…QSISNEQKAC (64 aa)) are cytoplasmic. Ser-135 carries the post-translational modification Phosphoserine. A helical transmembrane segment spans residues 178–203 (KVLGIVFFLFVVMWCPFFVTNIMAVI). Asn-198 provides a ligand contact to serotonin. The cysteines at positions 204 and 208 are disulfide-linked. Over 204-211 (CKESCNED) the chain is Extracellular. The chain crosses the membrane as a helical span at residues 212-237 (VIGALLNVFVWIGYLSSAVNPLVYTL). The short motif at 231–235 (NPLVY) is the NPxxY motif; important for ligand-induced conformation changes and signaling element. Residues 238–247 (FNKTYRSAFA) are Cytoplasmic-facing.

Belongs to the G-protein coupled receptor 1 family. In terms of assembly, interacts (via C-terminus) with MPDZ and PATJ. May interact (via C-terminus) with MPP3, PRDX6, DLG4, DLG1, CASK, APBA1 and MAGI2. Interacts with GRM2 and DRD2; this may affect signaling. As to expression, detected in adult intestine, especially in mucosal epithelium, longitudinal and circular layers of muscularis externa and myenteric plexuses. Highly expressed in Paneth cells, and detected at lower levels in enterocytes (at protein level).

It localises to the cell membrane. Its subcellular location is the cell projection. The protein resides in the dendrite. It is found in the axon. The protein localises to the cytoplasmic vesicle. It localises to the membrane. Its subcellular location is the caveola. The protein resides in the presynapse. With respect to regulation, G-protein coupled receptor activity is regulated by lipids: oleamide increases HTR2A-mediated activity. Functionally, G-protein coupled receptor for 5-hydroxytryptamine (serotonin). Also functions as a receptor for various drugs and psychoactive substances, including mescaline, psilocybin, 1-(2,5-dimethoxy-4-iodophenyl)-2-aminopropane (DOI) and lysergic acid diethylamide (LSD). Ligand binding causes a conformation change that triggers signaling via guanine nucleotide-binding proteins (G proteins) and modulates the activity of downstream effectors. HTR2A is coupled to G(q)/G(11) G alpha proteins and activates phospholipase C-beta, releasing diacylglycerol (DAG) and inositol 1,4,5-trisphosphate (IP3) second messengers that modulate the activity of phosphatidylinositol 3-kinase and promote the release of Ca(2+) ions from intracellular stores, respectively. Beta-arrestin family members inhibit signaling via G proteins and mediate activation of alternative signaling pathways. Affects neural activity, perception, cognition and mood. Plays a role in the regulation of behavior, including responses to anxiogenic situations and psychoactive substances. Plays a role in intestinal smooth muscle contraction, and may play a role in arterial vasoconstriction. This Cavia porcellus (Guinea pig) protein is 5-hydroxytryptamine receptor 2A (HTR2A).